The sequence spans 611 residues: Zinc metalloproteinase-disintegrin-like ohanin (611 aa).

Positions 1–20 (MIQVLLVTICLVVFPYQGSS) are cleaved as a signal peptide. Positions 21-187 (IILESGKVND…WESDEPIEKI (167 aa)) are excised as a propeptide. A Peptidase M12B domain is found at 198–393 (KYLELYIVAD…DTPQCLINKP (196 aa)). N-linked (GlcNAc...) asparagine glycosylation is found at asparagine 217 and asparagine 260. 3 disulfide bridges follow: cysteine 307–cysteine 388, cysteine 347–cysteine 372, and cysteine 349–cysteine 354. Histidine 332 is a Zn(2+) binding site. Glutamate 333 is a catalytic residue. Zn(2+) is bound by residues histidine 336 and histidine 342. Residue asparagine 395 is glycosylated (N-linked (GlcNAc...) asparagine). The Disintegrin domain occupies 401 to 487 (NAVCGNYVEE…ECPMDRFHKN (87 aa)). 14 cysteine pairs are disulfide-bonded: cysteine 404–cysteine 433, cysteine 415–cysteine 428, cysteine 417–cysteine 423, cysteine 427–cysteine 450, cysteine 441–cysteine 447, cysteine 446–cysteine 472, cysteine 459–cysteine 479, cysteine 466–cysteine 498, cysteine 491–cysteine 503, cysteine 510–cysteine 560, cysteine 525–cysteine 578, cysteine 538–cysteine 548, cysteine 555–cysteine 603, and cysteine 597–cysteine 608. Residues 465–467 (ECD) carry the D/ECD-tripeptide motif. Asparagine 528 carries an N-linked (GlcNAc...) asparagine glycan.

The protein belongs to the venom metalloproteinase (M12B) family. P-III subfamily. P-IIIa sub-subfamily. As to quaternary structure, monomer. Requires Zn(2+) as cofactor. In terms of tissue distribution, expressed by the venom gland.

It is found in the secreted. Inhibited by EDTA, but not by PMSF. Its function is as follows. Snake venom zinc metalloproteinase that has hemorrhagic activity. Inhibits ADP-, TMVA- and stejnulxin-induced platelet aggregation in a dose-dependent manner (on washed platelet, but not on platelet rich plasm). Also specifically degrades alpha-chain of fibrinogen (FGA). The chain is Zinc metalloproteinase-disintegrin-like ohanin from Ophiophagus hannah (King cobra).